We begin with the raw amino-acid sequence, 588 residues long: 2-succinyl-5-enolpyruvyl-6-hydroxy-3-cyclohexene-1-carboxylate synthase (588 aa).

The interval 1 to 22 is disordered; that stretch reads MTTTGSLPAQPSSTSPRTGNPS.

Belongs to the TPP enzyme family. MenD subfamily. In terms of assembly, homodimer. It depends on Mg(2+) as a cofactor. Mn(2+) is required as a cofactor. The cofactor is thiamine diphosphate.

It catalyses the reaction isochorismate + 2-oxoglutarate + H(+) = 5-enolpyruvoyl-6-hydroxy-2-succinyl-cyclohex-3-ene-1-carboxylate + CO2. Its pathway is quinol/quinone metabolism; 1,4-dihydroxy-2-naphthoate biosynthesis; 1,4-dihydroxy-2-naphthoate from chorismate: step 2/7. The protein operates within quinol/quinone metabolism; menaquinone biosynthesis. In terms of biological role, catalyzes the thiamine diphosphate-dependent decarboxylation of 2-oxoglutarate and the subsequent addition of the resulting succinic semialdehyde-thiamine pyrophosphate anion to isochorismate to yield 2-succinyl-5-enolpyruvyl-6-hydroxy-3-cyclohexene-1-carboxylate (SEPHCHC). This chain is 2-succinyl-5-enolpyruvyl-6-hydroxy-3-cyclohexene-1-carboxylate synthase, found in Clavibacter michiganensis subsp. michiganensis (strain NCPPB 382).